Here is a 706-residue protein sequence, read N- to C-terminus: MMSKCSSHNSLYALILLAQYHNITVNAETIRHQYNTHTQDFGVTEWLLAAKSIGLKAKYVEKHFSRLSIISLPALIWRDDGKHYILSRITKDSSRYLVYDPEQHQSLTFSRDEFEKLYQGKVILVTSRATVVGELAKFDFSWFIPSVVKYRRILLEVLTVSAFIQFLALITPLFFQVVMDKVLVHRGFSTLNIITIAFIIVILFEVILTGARTYIFSHTTSRIDVELGAKLFRHLLALPVSYFENRRVGETVARVRELEQIRNFLTGQALTSVLDLFFSVIFFCVMWYYSPQLTLVILLSLPCYVIWSLFISPLLRRRLDDKFLRNAENQAFLVETVTAINTIKSMAVSPQMIATWDKQLAGYVASSFRVNLVAMTGQQGIQLIQKSVMVISLWMGAHLVISGEISIGQLIAFNMLAGQVIAPVIRLAHLWQDFQQVGISVERLGDVLNTPVEKKSGRNILPEIQGDIEFKNVRFRYSSDGNVILNNINLYISKGDVIGIVGRSGSGKSTLTKLLQRFYIPETGQILIDGHDLSLADPEWLRRQIGVVLQENILLNRSIIDNITLASPAVSMEQAIEAARLAGAHDFIRELKEGYNTIVGEQGVGLSGGQRQRIAIARALVTNPRILIFDEATSALDYESENIIMKNMSRICKNRTVIIIAHRLSTVKNANRIIVMDNGFISEDGTHKELISKKDSLYAYLYQLQA.

The region spanning 1–125 (MMSKCSSHNS…KLYQGKVILV (125 aa)) is the Peptidase C39 domain. Histidine 83 is a catalytic residue. 5 helical membrane passes run 153 to 173 (ILLE…ITPL), 191 to 211 (LNII…LTGA), 269 to 289 (ALTS…MWYY), 295 to 315 (LVIL…SPLL), and 388 to 408 (VMVI…ISIG). One can recognise an ABC transmembrane type-1 domain in the interval 154–436 (LLEVLTVSAF…LAHLWQDFQQ (283 aa)). Residues 468-703 (IEFKNVRFRY…KDSLYAYLYQ (236 aa)) enclose the ABC transporter domain. Residue 502 to 509 (GRSGSGKS) coordinates ATP.

This sequence belongs to the ABC transporter superfamily. Protein-1 exporter (TC 3.A.1.109) family. In terms of assembly, homodimer.

The protein resides in the cell inner membrane. Part of the ABC transporter complex HlyBD involved in hemolysin export. Transmembrane domains (TMD) form a pore in the inner membrane and the ATP-binding domain (NBD) is responsible for energy generation. The sequence is that of Alpha-hemolysin translocation ATP-binding protein HlyB (hlyB) from Escherichia coli O157:H7.